The chain runs to 82 residues: Exodeoxyribonuclease 7 small subunit (82 aa).

The protein belongs to the XseB family. As to quaternary structure, heterooligomer composed of large and small subunits.

It is found in the cytoplasm. It carries out the reaction Exonucleolytic cleavage in either 5'- to 3'- or 3'- to 5'-direction to yield nucleoside 5'-phosphates.. Functionally, bidirectionally degrades single-stranded DNA into large acid-insoluble oligonucleotides, which are then degraded further into small acid-soluble oligonucleotides. The polypeptide is Exodeoxyribonuclease 7 small subunit (Coxiella burnetii (strain CbuG_Q212) (Coxiella burnetii (strain Q212))).